The chain runs to 432 residues: Probable exopolygalacturonase X (432 aa).

Positions 1–23 are cleaved as a signal peptide; it reads MKFSYSFVQVVTLLLSLSPSVEG. Residues Asn-113, Asn-129, and Asn-199 are each glycosylated (N-linked (GlcNAc...) asparagine). The stretch at 231–252 is one PbH1 1 repeat; the sequence is SDNIVIQNSVINNGDDCVSFKP. Catalysis depends on Asp-245, which acts as the Proton donor. Cys-247 and Cys-264 form a disulfide bridge. Residues Asn-253 and Asn-265 are each glycosylated (N-linked (GlcNAc...) asparagine). PbH1 repeat units follow at residues 254-274, 285-306, and 327-348; these read STNI…SVGS, VQNV…RIKV, and VKNV…EVTQ. His-268 is an active-site residue. N-linked (GlcNAc...) asparagine glycans are attached at residues Asn-292, Asn-297, Asn-329, Asn-354, and Asn-364. The stretch at 362-394 is one PbH1 5 repeat; it reads PSNLTISDIHFKNFRGTTSGKRDPNVGTIVCSS. Cysteines 392 and 398 form a disulfide.

The protein belongs to the glycosyl hydrolase 28 family.

The protein localises to the secreted. The catalysed reaction is [(1-&gt;4)-alpha-D-galacturonosyl](n) + H2O = alpha-D-galacturonate + [(1-&gt;4)-alpha-D-galacturonosyl](n-1). In terms of biological role, specific in hydrolyzing the terminal glycosidic bond of polygalacturonic acid and oligogalacturonates. The protein is Probable exopolygalacturonase X (pgaX) of Aspergillus fumigatus (strain CBS 144.89 / FGSC A1163 / CEA10) (Neosartorya fumigata).